The chain runs to 1214 residues: BOS complex subunit NOMO1 (1214 aa).

Positions 1 to 23 (MRAGRCAAALLLLLLSGAGRAIG) are cleaved as a signal peptide. At 24–1150 (SEDIVVGCGG…RKLPEQDIAQ (1127 aa)) the chain is on the extracellular side. N-linked (GlcNAc...) asparagine glycosylation is found at Asn-42, Asn-210, and Asn-610. Residues 692-720 (KSAQELRREQQLAEIETRRQEREKNGKEE) adopt a coiled-coil conformation. The segment covering 708–726 (TRRQEREKNGKEEGEEGRA) has biased composition (basic and acidic residues). The interval 708–733 (TRRQEREKNGKEEGEEGRARPPGQEM) is disordered. Residues 1151-1167 (GSYIALPLTLLLLLAGY) form a helical membrane-spanning segment. At 1168–1214 (NHDKLIPLLLQLTSRLQGVRALGQAASDSSGPEDMKRQTKKQKTRRT) the chain is on the cytoplasmic side. The interval 1190-1214 (GQAASDSSGPEDMKRQTKKQKTRRT) is disordered. Residues Ser-1196 and Ser-1197 each carry the phosphoserine modification. Over residues 1205-1214 (QTKKQKTRRT) the composition is skewed to basic residues.

As to quaternary structure, component of the back of Sec61 (BOS) complex, composed of NCLN/Nicalin, NOMO (NOMO1, NOMO2 or NOMO3) and TMEM147. The BOS complex is part of the multi-pass translocon (MPT) complex, composed of three subcomplexes, the GEL complex (composed of RAB5IF/OPTI and TMCO1), the BOS complex (composed of NCLN/Nicalin, NOMO and TMEM147) and the PAT complex (composed of WDR83OS/Asterix and CCDC47). The MPT complex associates with the SEC61 complex.

It localises to the endoplasmic reticulum membrane. In terms of biological role, component of the multi-pass translocon (MPT) complex that mediates insertion of multi-pass membrane proteins into the lipid bilayer of membranes. The MPT complex takes over after the SEC61 complex: following membrane insertion of the first few transmembrane segments of proteins by the SEC61 complex, the MPT complex occludes the lateral gate of the SEC61 complex to promote insertion of subsequent transmembrane regions. This chain is BOS complex subunit NOMO1, found in Mus musculus (Mouse).